We begin with the raw amino-acid sequence, 334 residues long: L-lactate dehydrogenase C chain (334 aa).

Residues 30–58 (GQVGMACAVTILLRELADELALVDVVEDK) and R100 each bind NAD(+). Substrate contacts are provided by R107, N139, and R170. N139 provides a ligand contact to NAD(+). H194 serves as the catalytic Proton acceptor. Substrate is bound at residue T249.

Belongs to the LDH/MDH superfamily. LDH family. In terms of assembly, homotetramer. As to expression, eye and liver.

Its subcellular location is the cytoplasm. The enzyme catalyses (S)-lactate + NAD(+) = pyruvate + NADH + H(+). The protein operates within fermentation; pyruvate fermentation to lactate; (S)-lactate from pyruvate: step 1/1. This is L-lactate dehydrogenase C chain (ldhc) from Fundulus heteroclitus (Killifish).